Consider the following 259-residue polypeptide: Gasdermin bGSDM (259 aa).

A lipid anchor (S-palmitoyl cysteine) is attached at cysteine 3. Transmembrane regions (beta stranded) follow at residues 70–86 (FQFR…AASV), 98–116 (SGSF…IQLS), 162–179 (GIRI…DLSA), and 187–203 (AKAK…SYAF). Residues 244-259 (PFAFIGDDAFVDLPES) are C-terminal region.

Belongs to the bacterial gasdermin family. As to quaternary structure, monomer in solution. Forms large, homooligomeric ring-shaped pores when inserted in membranes. In terms of processing, palmitoylation helps stabilize the inactive state; may self palmitoylate. Palmitoylation plays a significant role in pore formation.

The protein resides in the cytoplasm. Its subcellular location is the cell inner membrane. Its activity is regulated as follows. The full-length protein before cleavage is inactive: intramolecular interactions between the N-terminal domain and the C-terminal region as well as the lipid modification, mediate autoinhibition. The pyroptosis-like-inducing activity is carried by the released N-terminal domain (Gasdermin bGSDM, N-terminus). Precursor of a pore-forming protein involved in defense against bacteriophages. Expression of bGSDM and the neighboring protease gene (Ga0098714_109514) is toxic in E.coli on solid medium. Cleavage of this precursor by its dedicated protease releases the active moiety (gasdermin bGSDM, N-terminus) which inserts into membranes, forming pores and triggering cell death. Functionally, pore-forming protein that causes membrane permeabilization via a pyroptosis-like activity. Makes ring-like pores when released. In Bradyrhizobium tropiciagri, this protein is Gasdermin bGSDM.